The chain runs to 448 residues: Tryptophan--tRNA ligase (448 aa).

ATP is bound by residues 10-12 and 18-19; these read TPT and GN. A 'HIGH' region motif is present at residues 11–19; that stretch reads PTGTPHLGN. Aspartate 143 is an L-tryptophan binding site. Residues 155–157, leucine 197, and 204–208 each bind ATP; these read GRD and KMSKS. Positions 204-208 match the 'KMSKS' region motif; that stretch reads KMSKS.

The protein belongs to the class-I aminoacyl-tRNA synthetase family. As to quaternary structure, homodimer.

Its subcellular location is the cytoplasm. It carries out the reaction tRNA(Trp) + L-tryptophan + ATP = L-tryptophyl-tRNA(Trp) + AMP + diphosphate + H(+). Catalyzes the attachment of tryptophan to tRNA(Trp). The polypeptide is Tryptophan--tRNA ligase (Pseudomonas aeruginosa (strain ATCC 15692 / DSM 22644 / CIP 104116 / JCM 14847 / LMG 12228 / 1C / PRS 101 / PAO1)).